The following is a 431-amino-acid chain: Forkhead box protein P3 (431 aa).

The segment at 1–68 (MPNPRPGKPS…SSLNPMPPSQ (68 aa)) is disordered. The span at 10 to 25 (SAPSLALGPSPGASPS) shows a compositional bias: low complexity. Serine 19 carries the post-translational modification Phosphoserine; by CDK2. At lysine 31 the chain carries N6-acetyllysine. The Nuclear export signal signature appears at 68–76 (QLQLPTLPL). An LXXLL motif motif is present at residues 92–96 (LQALL). Positions 106-190 (LSTVDAHART…STLSAVPQSS (85 aa)) are essential for transcriptional repressor activity and for interaction with KAT5 and HDAC7. The interaction with ZFP90 stretch occupies residues 106-198 (LSTVDAHART…SSYPLLANGV (93 aa)). The interaction with IKZF4 stretch occupies residues 149–199 (LPPGINVASLEWVSREPALLCTFPNPSAPRKDSTLSAVPQSSYPLLANGVC). Residues 197–222 (GVCKWPGCEKVFEEPEDFLKHCQADH) form a C2H2-type zinc finger. The short motif at 239 to 248 (VQSLEQQLVL) is the Nuclear export signal element. Residues 239 to 260 (VQSLEQQLVLEKEKLSAMQAHL) are leucine-zipper. Glycyl lysine isopeptide (Lys-Gly) (interchain with G-Cter in ubiquitin) cross-links involve residues lysine 250 and lysine 252. Residues lysine 263 and lysine 268 each carry the N6-acetyllysine; alternate modification. Glycyl lysine isopeptide (Lys-Gly) (interchain with G-Cter in ubiquitin); alternate cross-links involve residues lysine 263 and lysine 268. The tract at residues 278–336 (GSCCIVAAGSQGPVVPAWSGPREAPDSLFAVRRHLWGSHGNSTFPEFLHNMDYFKFHNM) is interaction with RUNX1. The segment at residues 337 to 423 (RPPFTYATLI…RKKRSQRPSR (87 aa)) is a DNA-binding region (fork-head). Lysine 393 participates in a covalent cross-link: Glycyl lysine isopeptide (Lys-Gly) (interchain with G-Cter in ubiquitin). The Nuclear localization signal motif lies at 414 to 417 (RKKR). Serine 418 carries the phosphoserine modification. The propeptide occupies 418–431 (SQRPSRCSNPTPGP).

Homodimer. Dimerization is essential for its transcriptional regulator activity. Interacts with IKZF3. Isoform 1 (via LXXLL motif), but not isoform 2, interacts with isoform 4 of RORA (via AF-2 motif). Interacts with STUB1, HSPA8 and HSPA1A/B. Interacts with PPP1CA, PPP1CB and PPP1CG. Interacts with KAT5 and HDAC7. Interacts with HDAC9 in the absence of T-cell stimulation. Interacts with USP7. Interacts with isoform 2 of ZFP90 and can form a complex with TRIM28 in the presence of isoform 2 of ZFP90. Interacts with RUNX1. Interacts with RORC. Interacts with RELA and NFATC2. Interacts with RUNX2, RUNX3 and IKZF4. Polyubiquitinated, leading to its proteasomal degradation in regulatory T-cells (Treg) which is mediated by STUB1 in a HSPA1A/B-dependent manner. Deubiquitinated by USP7 and USP44; leading to increase in protein stability. Post-translationally, phosphorylation at Ser-418 regulates its transcriptional repressor activity and consequently, regulatory T-cells (Treg) suppressive function. Dephosphorylated at Ser-418 by protein phosphatase 1 (PP1) in Treg cells derived from patients with rheumatoid arthritis. Phosphorylation by CDK2 negatively regulates its transcriptional activity and protein stability. In terms of processing, acetylation on lysine residues stabilizes FOXP3 and promotes differentiation of T-cells into induced regulatory T-cells (iTregs) associated with suppressive functions. Acetylation is mediated by a coordinated action of KAT5 and EP300/p300 acetyltransferases: EP300/p300 is required to enhance KAT5 autoacetylation, promoting acetylation of FOXP3 by KAT5. Deacetylated by SIRT1. Undergoes proteolytic cleavage in activated regulatory T-cells (Treg), and can be cleaved at either the N- or C-terminal site, or at both sites.

The protein resides in the nucleus. It localises to the cytoplasm. Functionally, transcriptional regulator which is crucial for the development and inhibitory function of regulatory T-cells (Treg). Plays an essential role in maintaining homeostasis of the immune system by allowing the acquisition of full suppressive function and stability of the Treg lineage, and by directly modulating the expansion and function of conventional T-cells. Can act either as a transcriptional repressor or a transcriptional activator depending on its interactions with other transcription factors, histone acetylases and deacetylases. The suppressive activity of Treg involves the coordinate activation of many genes, including CTLA4 and TNFRSF18 by FOXP3 along with repression of genes encoding cytokines such as interleukin-2 (IL2) and interferon-gamma (IFNG). Inhibits cytokine production and T-cell effector function by repressing the activity of two key transcription factors, RELA and NFATC2. Mediates transcriptional repression of IL2 via its association with histone acetylase KAT5 and histone deacetylase HDAC7. Can activate the expression of TNFRSF18, IL2RA and CTLA4 and repress the expression of IL2 and IFNG via its association with transcription factor RUNX1. Inhibits the differentiation of IL17 producing helper T-cells (Th17) by antagonizing RORC function, leading to down-regulation of IL17 expression, favoring Treg development. Inhibits the transcriptional activator activity of RORA. Can repress the expression of IL2 and IFNG via its association with transcription factor IKZF4. This is Forkhead box protein P3 (FOXP3) from Homo sapiens (Human).